The sequence spans 426 residues: Dihydroorotase (426 aa).

Residues His58 and His60 each coordinate Zn(2+). Residues 60–62 (HLR) and Asn92 each bind substrate. Positions 150, 177, and 230 each coordinate Zn(2+). Position 276 (Asn276) interacts with substrate. Asp303 is a Zn(2+) binding site. Residue Asp303 is part of the active site. Substrate is bound by residues His307 and 321 to 322 (FG).

This sequence belongs to the metallo-dependent hydrolases superfamily. DHOase family. Class I DHOase subfamily. It depends on Zn(2+) as a cofactor.

The enzyme catalyses (S)-dihydroorotate + H2O = N-carbamoyl-L-aspartate + H(+). The protein operates within pyrimidine metabolism; UMP biosynthesis via de novo pathway; (S)-dihydroorotate from bicarbonate: step 3/3. In terms of biological role, catalyzes the reversible cyclization of carbamoyl aspartate to dihydroorotate. The protein is Dihydroorotase of Listeria monocytogenes serotype 4a (strain HCC23).